Reading from the N-terminus, the 128-residue chain is Large ribosomal subunit protein bL20 (128 aa).

This sequence belongs to the bacterial ribosomal protein bL20 family.

In terms of biological role, binds directly to 23S ribosomal RNA and is necessary for the in vitro assembly process of the 50S ribosomal subunit. It is not involved in the protein synthesizing functions of that subunit. The protein is Large ribosomal subunit protein bL20 of Micrococcus luteus (strain ATCC 4698 / DSM 20030 / JCM 1464 / CCM 169 / CCUG 5858 / IAM 1056 / NBRC 3333 / NCIMB 9278 / NCTC 2665 / VKM Ac-2230) (Micrococcus lysodeikticus).